Reading from the N-terminus, the 527-residue chain is Abrin-b (527 aa).

Q1 is modified (pyrrolidone carboxylic acid). N110 carries an N-linked (GlcNAc...) asparagine glycan. Residue E163 is part of the active site. Disulfide bonds link C246-C268, C285-C304, and C328-C345. A Ricin B-type lectin 1 domain is found at 272–399 (YEPTVRIGGR…YLMRQGWRTG (128 aa)). The 1-alpha repeat unit spans residues 282 to 324 (NGMCVDVYDDGYHNGNRIIAWKCKDRLEENQLWTLKSDKTIRS). Residues 325 to 365 (NGKCLTTEGYAPGNYVMIYDCTSAVAEATYWEIWDNGTIIN) form a 1-beta repeat. N360 and N400 each carry an N-linked (GlcNAc...) asparagine glycan. The 1-gamma repeat unit spans residues 368 to 400 (SALVLSAESSSMGGTLTVQTNEYLMRQGWRTGN). Residues 402–526 (TSPFVTSISG…GKPNQIWLTL (125 aa)) enclose the Ricin B-type lectin 2 domain. The stretch at 413–448 (SDLCMQAQGSNVWLAYCDNNKKEQQWALYTDGSIRS) is one 2-alpha repeat. 2 disulfides stabilise this stretch: C416/C429 and C455/C472. The 2-beta repeat unit spans residues 452–491 (TNNCLTSKDHKQGSPIVLMACSNGWASQRWLFRNDGSIYN). The stretch at 494-527 (DDMVMDVKRSDPSLKEIILHPYHGKPNQIWLTLF) is one 2-gamma repeat.

It in the N-terminal section; belongs to the ribosome-inactivating protein family. Type 2 RIP subfamily. In terms of assembly, disulfide-linked dimer of A and B chains.

It carries out the reaction Endohydrolysis of the N-glycosidic bond at one specific adenosine on the 28S rRNA.. The A chain is responsible for inhibiting protein synthesis through the catalytic inactivation of 60S ribosomal subunits by removing adenine from position 4,324 of 28S rRNA. Abrin-a is more toxic than ricin. In terms of biological role, the B chain is a galactose-specific lectin that facilitates the binding of abrin to the cell membrane that precedes endocytosis. In Abrus precatorius (Indian licorice), this protein is Abrin-b.